The chain runs to 204 residues: Large ribosomal subunit protein uL4 (204 aa).

The span at 42-52 (GTKAQKSRSQV) shows a compositional bias: polar residues. Residues 42 to 70 (GTKAQKSRSQVSGTTKKSKKQKGGGARHG) are disordered.

The protein belongs to the universal ribosomal protein uL4 family. As to quaternary structure, part of the 50S ribosomal subunit.

Functionally, one of the primary rRNA binding proteins, this protein initially binds near the 5'-end of the 23S rRNA. It is important during the early stages of 50S assembly. It makes multiple contacts with different domains of the 23S rRNA in the assembled 50S subunit and ribosome. Its function is as follows. Forms part of the polypeptide exit tunnel. The chain is Large ribosomal subunit protein uL4 from Xylella fastidiosa (strain M12).